Reading from the N-terminus, the 373-residue chain is DNA replication and repair protein RecF (373 aa).

30–37 (GDNAQGKT) lines the ATP pocket.

It belongs to the RecF family.

The protein localises to the cytoplasm. Functionally, the RecF protein is involved in DNA metabolism; it is required for DNA replication and normal SOS inducibility. RecF binds preferentially to single-stranded, linear DNA. It also seems to bind ATP. The polypeptide is DNA replication and repair protein RecF (Oenococcus oeni (strain ATCC BAA-331 / PSU-1)).